A 668-amino-acid chain; its full sequence is MAP kinase kinase PBS2 (668 aa).

Over residues 1 to 15 (MEDKFANLSLHEKTG) the composition is skewed to basic and acidic residues. 3 disordered regions span residues 1–43 (MEDK…SSHY), 61–120 (RALK…ASSK), and 181–313 (NPNR…GSSG). 3 stretches are compositionally biased toward polar residues: residues 16–43 (KSSI…SSHY), 68–91 (SVGS…QQIV), and 104–120 (SKVS…ASSK). A Phosphoserine modification is found at Ser68. Over residues 239–250 (AQQPQQFAPSPS) the composition is skewed to low complexity. Ser269 bears the Phosphoserine mark. Polar residues predominate over residues 270–300 (NPGSLINGVQSTSTSSSTEGPHDTVGTTPRT). Residues 301–310 (GNSNNSSNSG) show a composition bias toward low complexity. A Protein kinase domain is found at 360 to 623 (LEFLDELGHG…YAALTEHPWL (264 aa)). ATP contacts are provided by residues 366 to 374 (LGHGNYGNV) and Lys389. Asp485 acts as the Proton acceptor in catalysis. Ser514 is subject to Phosphoserine. Thr518 carries the post-translational modification Phosphothreonine.

The protein belongs to the protein kinase superfamily. STE Ser/Thr protein kinase family. MAP kinase kinase subfamily. In terms of assembly, interacts with NBP2, PTC1, SHO1 and STE11. Activated by phosphorylation by SSK2 or SSK22. Ser/Thr phosphorylation is also necessary for SHO1-mediated activation.

The protein localises to the cytoplasm. It catalyses the reaction L-seryl-[protein] + ATP = O-phospho-L-seryl-[protein] + ADP + H(+). The catalysed reaction is L-threonyl-[protein] + ATP = O-phospho-L-threonyl-[protein] + ADP + H(+). The enzyme catalyses L-tyrosyl-[protein] + ATP = O-phospho-L-tyrosyl-[protein] + ADP + H(+). Functionally, kinase involved in a signal transduction pathway that is activated by changes in the osmolarity of the extracellular environment. Activates the MAP kinase HOG1 by concomitant phosphorylation at 'Thr-174' and 'Tyr-176'. This is MAP kinase kinase PBS2 (PBS2) from Saccharomyces cerevisiae (strain ATCC 204508 / S288c) (Baker's yeast).